A 712-amino-acid polypeptide reads, in one-letter code: MMEVGFSLIQWLISSGADSPFIFGWLVTGSVGLLAVIYTFLKWQKKTSLNWVKAAAREKKKVWKRLRVPLSHHQWTDDYGYGQQPSTCCVCLYSLVPGQNVSNKASLSIPVHRCAVCGVAAHFYCSSSAAKDCKCVAQAGSDHVRHHWSERWVNMDDNADMTAFCFYCDEPCGIPFIEASPMWHCLWCQRLIHVKCHMIMSKESGDACDLGSLRRVILSPVHVKLNEANGVDGVLTTIKNELASIRGHVRRKRHRGKNGNGQSLNGKLLEDSVSDPVKTVVNGLVVKKLRRDRSIDCLKQVSDMPNAKGLQNGIGGHKRNKSAALNFMKKFSLVDLPPDARPLLVFINAKSGGQLGPFLHRRLNMLLNPVQVFELGSCQGPDAGLDLCSKVKYFRVLVCGGDGTVAWVLDAIEKRNFESPPPVAILPLGTGNDLSRVLQWGRGISVVDGQGSLRTFLQDIDHAAVTMLDRWSVKIVEESTEKFPAREGHKFMMNYLGIGCDAKVAYEFHMMRQEKPEKFCSQFVNKLRYAKEGARDIMDRACADLPWQVWLEVDGKDIEIPKDSEGLIVLNIGSYMGGVDLWQNDYEHDDNFSIQCMHDKTLEVVCVRGAWHLGKLQVGLSQARRLAQGKVIRIHVSSPFPVQIDGEPFIQQPGCLEITHHGQVFMLRRASDEPRGHAAAIMNEVLLDAECKGVINASQKKVLLQQMALHLS.

2 Phorbol-ester/DAG-type zinc fingers span residues 72–133 (HHQW…AKDC) and 145–208 (RHHW…GDAC). In terms of domain architecture, DAGKc spans 338 to 479 (PDARPLLVFI…RWSVKIVEES (142 aa)).

The protein belongs to the eukaryotic diacylglycerol kinase family. As to quaternary structure, monomer. As to expression, expressed in rosette and cauline leaves, flowers, siliques and roots. Highly expressed in young leaves and at lower levels in older leaves. In young seedlings, expressed at the root-shoot junction zone and vascular bundles of the cotyledons. In older plants, expressed in root tip, central cylinder, root hair, leaf mesophyll cells and guard cells, sepals, filaments of the anthers, stigma, valves of young and early adult siliques and hilum of seeds.

Its subcellular location is the endoplasmic reticulum. It catalyses the reaction a 1,2-diacyl-sn-glycerol + ATP = a 1,2-diacyl-sn-glycero-3-phosphate + ADP + H(+). The catalysed reaction is 1-octadecanoyl-2-(5Z,8Z,11Z,14Z-eicosatetraenoyl)-sn-glycerol + ATP = 1-octadecanoyl-2-(5Z,8Z,11Z,14Z-eicosatetraenoyl)-sn-glycero-3-phosphate + ADP + H(+). It carries out the reaction 1,2-di-(9Z-octadecenoyl)-sn-glycerol + ATP = 1,2-di-(9Z-octadecenoyl)-sn-glycero-3-phosphate + ADP + H(+). Its function is as follows. Phosphorylates the second messenger diacylglycerol (DAG) to generate phosphatidic acid (PA), another important signaling molecule. PA is required for plant development and responses to abiotic stress and pathogen attack. May be involved in the accumulation of PA during cold stress. Involved in response to freezing stress by modulating the accumulation of PA. Exhibits high specificity for the unsaturated DAG analogs 1-stearoyl-2-arachidonoyl-sn-glycerol (1,2-SAG) and 1,2-dioleoyl-sn-glycerol (1,2-DOG). Exhibits high specificity for 1-palmitoyl, 2-oleoyl-sn-glycerol (1,2 POG), 1-stearoyl, 2-linoleoyl-sn-glycerol (1,2-SLG) and 1-oleoyl, 2-palmitoyl-sn-glycerol (1,2-OPG). Has almost no activity toward 1,2-dioctanoyl-sn-glycerol (1,2-DOCG), 1,2-dipalmitoyl-sn-glycerol (1,2-DPG), 1,2-dimyristoyl-sn-glycerol (1,2-DMG) and 1-oleoyl-2-acetyl-sn-glycerol (1,2-OAG). Functions together with DGK4 in male gametophyte development and biosynthesis of phosphatidylglycerol and phosphatidylinositol in the endoplasmic reticulum (ER). Involved in PA production for pollen grain growth, as well as leaf and root growth. The polypeptide is Diacylglycerol kinase 2 (Arabidopsis thaliana (Mouse-ear cress)).